Here is a 715-residue protein sequence, read N- to C-terminus: Fatty acid oxidation complex subunit alpha (715 aa).

The interval methionine 1–proline 190 is enoyl-CoA hydratase. Residues glycine 306 to glycine 714 are 3-hydroxyacyl-CoA dehydrogenase.

This sequence in the N-terminal section; belongs to the enoyl-CoA hydratase/isomerase family. In the central section; belongs to the 3-hydroxyacyl-CoA dehydrogenase family. Heterotetramer of two alpha chains (FadJ) and two beta chains (FadI).

It localises to the cytoplasm. It catalyses the reaction a (3S)-3-hydroxyacyl-CoA = a (2E)-enoyl-CoA + H2O. The catalysed reaction is a 4-saturated-(3S)-3-hydroxyacyl-CoA = a (3E)-enoyl-CoA + H2O. It carries out the reaction a (3S)-3-hydroxyacyl-CoA + NAD(+) = a 3-oxoacyl-CoA + NADH + H(+). The enzyme catalyses (3S)-3-hydroxybutanoyl-CoA = (3R)-3-hydroxybutanoyl-CoA. It participates in lipid metabolism; fatty acid beta-oxidation. Its function is as follows. Catalyzes the formation of a hydroxyacyl-CoA by addition of water on enoyl-CoA. Also exhibits 3-hydroxyacyl-CoA epimerase and 3-hydroxyacyl-CoA dehydrogenase activities. The chain is Fatty acid oxidation complex subunit alpha from Salmonella typhi.